We begin with the raw amino-acid sequence, 517 residues long: Serine carboxypeptidase ctsa-3.2 (517 aa).

A signal peptide spans 1-21 (MWWTSLVFSVLLFDLIFISNC). Ser-172 is an active-site residue. Asn-269 carries an N-linked (GlcNAc...) asparagine glycan. Catalysis depends on residues Asp-418 and His-485.

The protein belongs to the peptidase S10 family.

The sequence is that of Serine carboxypeptidase ctsa-3.2 from Caenorhabditis elegans.